We begin with the raw amino-acid sequence, 1046 residues long: Translation initiation factor IF-2 (1046 aa).

Residues 49-450 (ALQQGNGGKA…GVMLPRGNGQ (402 aa)) form a disordered region. 2 stretches are compositionally biased toward low complexity: residues 57-80 (KAAPRKAAPAKPGAPSPAQAARPA) and 89-106 (PAAAERPAAAERPAAAPA). Pro residues predominate over residues 107–128 (APGPRPGPKPAPRPAPAAPAPA). The span at 129–169 (APEFTAPPSAPAAPAAAASGPRPGARPGAPKPGGARPATPG) shows a compositional bias: low complexity. The span at 177 to 194 (RGERTDRGDRGDRGDRQG) shows a compositional bias: basic and acidic residues. Low complexity predominate over residues 195-214 (AARPGGQAPRPGARPAGPRP). Composition is skewed to gly residues over residues 239-248 (PRPGGAGAPG) and 266-280 (GGPGGAPRPQGGPGG). A compositionally biased stretch (low complexity) spans 302–318 (GNRPNPGMMPQRPAAGP). Residues 319 to 414 (RPGGGGPGGR…GTQGAFGRPG (96 aa)) are compositionally biased toward gly residues. Over residues 418-427 (RRGRKSKRQR) the composition is skewed to basic residues. Residues 539-711 (ARPPVVTVMG…VVLTADASLD (173 aa)) form the tr-type G domain. The segment at 548 to 555 (GHVDHGKT) is G1. 548–555 (GHVDHGKT) is a binding site for GTP. Residues 573-577 (GITQH) form a G2 region. A G3 region spans residues 598 to 601 (DTPG). Residues 598–602 (DTPGH) and 652–655 (NKID) contribute to the GTP site. The interval 652-655 (NKID) is G4. The tract at residues 688 to 690 (SAK) is G5.

Belongs to the TRAFAC class translation factor GTPase superfamily. Classic translation factor GTPase family. IF-2 subfamily.

Its subcellular location is the cytoplasm. One of the essential components for the initiation of protein synthesis. Protects formylmethionyl-tRNA from spontaneous hydrolysis and promotes its binding to the 30S ribosomal subunits. Also involved in the hydrolysis of GTP during the formation of the 70S ribosomal complex. The chain is Translation initiation factor IF-2 from Streptomyces avermitilis (strain ATCC 31267 / DSM 46492 / JCM 5070 / NBRC 14893 / NCIMB 12804 / NRRL 8165 / MA-4680).